A 266-amino-acid polypeptide reads, in one-letter code: ATP synthase subunit a (266 aa).

5 consecutive transmembrane segments (helical) span residues 33 to 53 (FWTL…LFLA), 95 to 115 (VIAP…LMDL), 141 to 161 (DVNI…FYSI), 206 to 226 (LFGN…LLPW), and 237 to 257 (AIFH…LTIV).

This sequence belongs to the ATPase A chain family. In terms of assembly, F-type ATPases have 2 components, CF(1) - the catalytic core - and CF(0) - the membrane proton channel. CF(1) has five subunits: alpha(3), beta(3), gamma(1), delta(1), epsilon(1). CF(0) has three main subunits: a(1), b(2) and c(9-12). The alpha and beta chains form an alternating ring which encloses part of the gamma chain. CF(1) is attached to CF(0) by a central stalk formed by the gamma and epsilon chains, while a peripheral stalk is formed by the delta and b chains.

It is found in the cell inner membrane. Its function is as follows. Key component of the proton channel; it plays a direct role in the translocation of protons across the membrane. This Klebsiella pneumoniae subsp. pneumoniae (strain ATCC 700721 / MGH 78578) protein is ATP synthase subunit a.